We begin with the raw amino-acid sequence, 412 residues long: Serine hydroxymethyltransferase (412 aa).

Residues leucine 117 and 121–123 (GHL) contribute to the (6S)-5,6,7,8-tetrahydrofolate site. Lysine 226 carries the post-translational modification N6-(pyridoxal phosphate)lysine. 349–351 (SPF) provides a ligand contact to (6S)-5,6,7,8-tetrahydrofolate.

This sequence belongs to the SHMT family. As to quaternary structure, homodimer. Pyridoxal 5'-phosphate is required as a cofactor.

It is found in the cytoplasm. It carries out the reaction (6R)-5,10-methylene-5,6,7,8-tetrahydrofolate + glycine + H2O = (6S)-5,6,7,8-tetrahydrofolate + L-serine. Its pathway is one-carbon metabolism; tetrahydrofolate interconversion. The protein operates within amino-acid biosynthesis; glycine biosynthesis; glycine from L-serine: step 1/1. In terms of biological role, catalyzes the reversible interconversion of serine and glycine with tetrahydrofolate (THF) serving as the one-carbon carrier. This reaction serves as the major source of one-carbon groups required for the biosynthesis of purines, thymidylate, methionine, and other important biomolecules. Also exhibits THF-independent aldolase activity toward beta-hydroxyamino acids, producing glycine and aldehydes, via a retro-aldol mechanism. The chain is Serine hydroxymethyltransferase from Geobacillus thermodenitrificans (strain NG80-2).